Here is a 681-residue protein sequence, read N- to C-terminus: Proton channel OTOP3 (681 aa).

Positions Met1–Gly25 are enriched in basic and acidic residues. The tract at residues Met1–Lys26 is disordered. Over Met1 to Arg112 the chain is Cytoplasmic. Residues Leu113 to Val133 form a helical membrane-spanning segment. The Extracellular portion of the chain corresponds to Ala134–Arg143. The helical transmembrane segment at Asp144–Phe166 threads the bilayer. The Cytoplasmic portion of the chain corresponds to Ile167 to Ala182. The helical transmembrane segment at Met183 to Ile204 threads the bilayer. Over Gly205–Leu216 the chain is Extracellular. Residues Met217 to Cys240 traverse the membrane as a helical segment. The Cytoplasmic segment spans residues Lys241–His248. The chain crosses the membrane as a helical span at residues Ser249–Ile271. Topologically, residues Asp272 to Pro317 are extracellular. A helical membrane pass occupies residues Phe318 to Trp334. Residues Lys335 to Ile358 are Cytoplasmic-facing. Residues Tyr359–Tyr378 form a helical membrane-spanning segment. At Gln379–Tyr392 the chain is on the extracellular side. A helical membrane pass occupies residues His393–Ile415. At Ala416 to Lys507 the chain is on the cytoplasmic side. Residues Leu508–Ile529 form a helical membrane-spanning segment. Residues Ala530–Leu540 are Extracellular-facing. A helical transmembrane segment spans residues Ser541 to Ile563. Over Glu564 to Glu614 the chain is Cytoplasmic. The chain crosses the membrane as a helical span at residues Met615–Phe632. Over Gly633 to Ile651 the chain is Extracellular. The chain crosses the membrane as a helical span at residues Trp652–Leu674. The Cytoplasmic portion of the chain corresponds to Leu675–Ala681.

This sequence belongs to the otopetrin family. Homodimer.

It is found in the cell membrane. The enzyme catalyses H(+)(in) = H(+)(out). With respect to regulation, pH regulates the proton channel activity from both sides of the plasma membrane. Low pH activates the channel from the extracellular side but inactivates the channel on the intracellular side. Zn(2+) and Ca(2+) can partially block the channel. In terms of biological role, proton-selective channel gated by extracellular protons. This chain is Proton channel OTOP3 (otop3), found in Xenopus tropicalis (Western clawed frog).